We begin with the raw amino-acid sequence, 344 residues long: Probable dual-specificity RNA methyltransferase RlmN (344 aa).

Glutamate 92 functions as the Proton acceptor in the catalytic mechanism. The region spanning 98-325 (DEDRATLCVS…TTIRASRGED (228 aa)) is the Radical SAM core domain. The cysteines at positions 105 and 330 are disulfide-linked. 3 residues coordinate [4Fe-4S] cluster: cysteine 112, cysteine 116, and cysteine 119. Residues 157–158 (GE), serine 189, 211–213 (SLH), and histidine 287 each bind S-adenosyl-L-methionine. The active-site S-methylcysteine intermediate is cysteine 330.

Belongs to the radical SAM superfamily. RlmN family. Requires [4Fe-4S] cluster as cofactor.

It is found in the cytoplasm. It carries out the reaction adenosine(2503) in 23S rRNA + 2 reduced [2Fe-2S]-[ferredoxin] + 2 S-adenosyl-L-methionine = 2-methyladenosine(2503) in 23S rRNA + 5'-deoxyadenosine + L-methionine + 2 oxidized [2Fe-2S]-[ferredoxin] + S-adenosyl-L-homocysteine. It catalyses the reaction adenosine(37) in tRNA + 2 reduced [2Fe-2S]-[ferredoxin] + 2 S-adenosyl-L-methionine = 2-methyladenosine(37) in tRNA + 5'-deoxyadenosine + L-methionine + 2 oxidized [2Fe-2S]-[ferredoxin] + S-adenosyl-L-homocysteine. Specifically methylates position 2 of adenine 2503 in 23S rRNA and position 2 of adenine 37 in tRNAs. The sequence is that of Probable dual-specificity RNA methyltransferase RlmN from Bacteroides fragilis (strain YCH46).